The primary structure comprises 328 residues: Beta-ketoacyl-[acyl-carrier-protein] synthase III (328 aa).

Active-site residues include cysteine 122 and histidine 255. The interval 256-260 (QANIR) is ACP-binding. Asparagine 285 is an active-site residue.

This sequence belongs to the thiolase-like superfamily. FabH family. Homodimer.

The protein resides in the cytoplasm. The enzyme catalyses malonyl-[ACP] + acetyl-CoA + H(+) = 3-oxobutanoyl-[ACP] + CO2 + CoA. Its pathway is lipid metabolism; fatty acid biosynthesis. Functionally, catalyzes the condensation reaction of fatty acid synthesis by the addition to an acyl acceptor of two carbons from malonyl-ACP. Catalyzes the first condensation reaction which initiates fatty acid synthesis and may therefore play a role in governing the total rate of fatty acid production. Possesses both acetoacetyl-ACP synthase and acetyl transacylase activities. Its substrate specificity determines the biosynthesis of branched-chain and/or straight-chain of fatty acids. In Herminiimonas arsenicoxydans, this protein is Beta-ketoacyl-[acyl-carrier-protein] synthase III.